The following is a 187-amino-acid chain: Orotate phosphoribosyltransferase (187 aa).

Residues Arg-98, Lys-99, Lys-102, His-104, and 128–136 contribute to the 5-phospho-alpha-D-ribose 1-diphosphate site; that span reads EDVTTTGGS. Orotate-binding residues include Thr-132 and Arg-160.

The protein belongs to the purine/pyrimidine phosphoribosyltransferase family. PyrE subfamily. Homodimer. The cofactor is Mg(2+).

The enzyme catalyses orotidine 5'-phosphate + diphosphate = orotate + 5-phospho-alpha-D-ribose 1-diphosphate. The protein operates within pyrimidine metabolism; UMP biosynthesis via de novo pathway; UMP from orotate: step 1/2. Catalyzes the transfer of a ribosyl phosphate group from 5-phosphoribose 1-diphosphate to orotate, leading to the formation of orotidine monophosphate (OMP). The polypeptide is Orotate phosphoribosyltransferase (Rhodopseudomonas palustris (strain BisB18)).